We begin with the raw amino-acid sequence, 622 residues long: UvrABC system protein C (622 aa).

In terms of domain architecture, GIY-YIG spans 13–92 (EKPGVYLMKN…IKKYRPKYNI (80 aa)). The region spanning 204–239 (KDILDKLKNQMEEASNSLQFEKAASLRDKIFAVKKI) is the UVR domain.

This sequence belongs to the UvrC family. In terms of assembly, interacts with UvrB in an incision complex.

It is found in the cytoplasm. In terms of biological role, the UvrABC repair system catalyzes the recognition and processing of DNA lesions. UvrC both incises the 5' and 3' sides of the lesion. The N-terminal half is responsible for the 3' incision and the C-terminal half is responsible for the 5' incision. The chain is UvrABC system protein C from Clostridium tetani (strain Massachusetts / E88).